Consider the following 456-residue polypeptide: tRNA modification GTPase MnmE (456 aa).

(6S)-5-formyl-5,6,7,8-tetrahydrofolate contacts are provided by Arg24, Glu81, and Lys120. Residues Gly216 to Gly379 form the TrmE-type G domain. Residue Asn226 coordinates K(+). GTP is bound by residues Asn226 to Ser231, Thr245 to Thr251, Asp270 to Gly273, and Asn335 to Asp338. Mg(2+) is bound at residue Ser230. Thr245, Ile247, and Thr250 together coordinate K(+). Residue Thr251 coordinates Mg(2+). Lys456 is a (6S)-5-formyl-5,6,7,8-tetrahydrofolate binding site.

Belongs to the TRAFAC class TrmE-Era-EngA-EngB-Septin-like GTPase superfamily. TrmE GTPase family. In terms of assembly, homodimer. Heterotetramer of two MnmE and two MnmG subunits. K(+) is required as a cofactor.

It localises to the cytoplasm. Exhibits a very high intrinsic GTPase hydrolysis rate. Involved in the addition of a carboxymethylaminomethyl (cmnm) group at the wobble position (U34) of certain tRNAs, forming tRNA-cmnm(5)s(2)U34. The protein is tRNA modification GTPase MnmE of Pseudomonas fluorescens (strain Pf0-1).